The chain runs to 121 residues: Large ribosomal subunit protein bL20 (121 aa).

It belongs to the bacterial ribosomal protein bL20 family.

Its function is as follows. Binds directly to 23S ribosomal RNA and is necessary for the in vitro assembly process of the 50S ribosomal subunit. It is not involved in the protein synthesizing functions of that subunit. In Wolbachia pipientis subsp. Culex pipiens (strain wPip), this protein is Large ribosomal subunit protein bL20.